We begin with the raw amino-acid sequence, 166 residues long: Interferon gamma (166 aa).

Residues methionine 1–glycine 23 form the signal peptide. At glutamine 24 the chain carries Pyrrolidone carboxylic acid. Asparagine 39 and asparagine 106 each carry an N-linked (GlcNAc...) asparagine glycan.

This sequence belongs to the type II (or gamma) interferon family. In terms of assembly, homodimer. Interacts with IFNGR1 (via extracellular domain); this interaction promotes IFNGR1 dimerization. As to expression, released primarily from activated T lymphocytes.

It is found in the secreted. Type II interferon produced by immune cells such as T-cells and NK cells that plays crucial roles in antimicrobial, antiviral, and antitumor responses by activating effector immune cells and enhancing antigen presentation. Primarily signals through the JAK-STAT pathway after interaction with its receptor IFNGR1 to affect gene regulation. Upon IFNG binding, IFNGR1 intracellular domain opens out to allow association of downstream signaling components JAK2, JAK1 and STAT1, leading to STAT1 activation, nuclear translocation and transcription of IFNG-regulated genes. Many of the induced genes are transcription factors such as IRF1 that are able to further drive regulation of a next wave of transcription. Plays a role in class I antigen presentation pathway by inducing a replacement of catalytic proteasome subunits with immunoproteasome subunits. In turn, increases the quantity, quality, and repertoire of peptides for class I MHC loading. Increases the efficiency of peptide generation also by inducing the expression of activator PA28 that associates with the proteasome and alters its proteolytic cleavage preference. Up-regulates as well MHC II complexes on the cell surface by promoting expression of several key molecules such as cathepsins B/CTSB, H/CTSH, and L/CTSL. Participates in the regulation of hematopoietic stem cells during development and under homeostatic conditions by affecting their development, quiescence, and differentiation. The sequence is that of Interferon gamma (IFNG) from Cervus elaphus (Red deer).